Here is an 883-residue protein sequence, read N- to C-terminus: Mitogen-activated protein kinase kinase kinase YODA (883 aa).

Disordered stretches follow at residues 28–193, 303–364, and 376–396; these read GFAS…AEMF, CSPE…PPLL, and SAAT…TVSP. Low complexity predominate over residues 57-72; that stretch reads SRLPSRSPSPSTRVSR. A compositionally biased stretch (polar residues) spans 94–105; it reads VTSTDSGMNGSQ. Over residues 143–165 the composition is skewed to low complexity; sequence SVSSGSSVGDIPSDSLLSPLASD. Composition is skewed to polar residues over residues 167–189 and 314–328; these read ENGN…NKNS and RMTS…QSGA. The region spanning 400-656 is the Protein kinase domain; that stretch reads WKKGRLLGMG…AAQLLDHAFV (257 aa). Residues 406-414 and Lys-429 each bind ATP; that span reads LGMGSFGHV. Asp-525 (proton acceptor) is an active-site residue. Disordered stretches follow at residues 712 to 773 and 787 to 838; these read GSGF…GAIP and EGIG…IQPG. A compositionally biased stretch (low complexity) spans 733–756; that stretch reads SPIFHSHSPHISGRRSPSPISSPH.

This sequence belongs to the protein kinase superfamily. STE Ser/Thr protein kinase family. MAP kinase kinase kinase subfamily. As to quaternary structure, interacts with ASK7. Interacts with BSK12/SSP. Binds to BASL and MPK6. In terms of tissue distribution, expressed in roots, leaves, guard cells, stems, flowers and siliques.

The protein localises to the cytoplasm. It localises to the cell cortex. Its subcellular location is the cell membrane. It catalyses the reaction L-seryl-[protein] + ATP = O-phospho-L-seryl-[protein] + ADP + H(+). The enzyme catalyses L-threonyl-[protein] + ATP = O-phospho-L-threonyl-[protein] + ADP + H(+). With respect to regulation, contains an N-terminal autoinhibitory domain. Its function is as follows. Functions in a MAP kinase cascade that acts as a molecular switch to regulate the first cell fate decisions in the zygote and the early embryo. Promotes elongation of the zygote and development of its basal daughter cell into the extra-embryonic suspensor. In stomatal development, acts downstream of the LRR receptor TMM, but upstream of the MKK4/MKK5-MPK3/MPK6 module to regulate stomatal cell fate before the guard mother cell (GMC) is specified. Plays a central role in both guard cell identity and pattern formation. This MAPK cascade also functions downstream of the ER receptor in regulating coordinated local cell proliferation, which shapes the morphology of plant organs. Upon brassinosteroid signaling, is inhibited by phosphorylation of its auto-inhibitory N-terminal domain by the GSK3-like kinase ASK7. The chain is Mitogen-activated protein kinase kinase kinase YODA from Arabidopsis thaliana (Mouse-ear cress).